We begin with the raw amino-acid sequence, 231 residues long: UPF0758 protein YsxA (231 aa).

An MPN domain is found at 109–231 (VIRSPEDGAN…FVSLKEKGYL (123 aa)). Positions 180, 182, and 193 each coordinate Zn(2+). The short motif at 180–193 (HNHPSGDPTPSRED) is the JAMM motif element.

Belongs to the UPF0758 family.

The sequence is that of UPF0758 protein YsxA (ysxA) from Bacillus subtilis (strain 168).